Here is a 321-residue protein sequence, read N- to C-terminus: Putative pyridoxal kinase (321 aa).

Substrate is bound by residues serine 23 and tyrosine 144. Residues 203–204 (TS) and 230–242 (TFPR…VGTG) contribute to the ATP site. Aspartate 243 is a binding site for substrate.

This sequence belongs to the pyridoxine kinase family. Requires Zn(2+) as cofactor. It depends on Mg(2+) as a cofactor.

The enzyme catalyses pyridoxal + ATP = pyridoxal 5'-phosphate + ADP + H(+). Functionally, required for synthesis of pyridoxal-5-phosphate from vitamin B6. The chain is Putative pyridoxal kinase from Caenorhabditis elegans.